The sequence spans 133 residues: Nickel-responsive regulator (133 aa).

His76, His87, His89, and Cys95 together coordinate Ni(2+).

The protein belongs to the transcriptional regulatory CopG/NikR family. Homotetramer. It depends on Ni(2+) as a cofactor.

Its function is as follows. Transcriptional repressor of the nikABCDE operon. Is active in the presence of excessive concentrations of intracellular nickel. The polypeptide is Nickel-responsive regulator (Enterobacter sp. (strain 638)).